The primary structure comprises 151 residues: Secreted RxLR effector protein 30 (151 aa).

Positions 1-19 (MRSSTILIVLGIAILAVNG) are cleaved as a signal peptide. The RxLR-dEER motif lies at 38 to 53 (RLLRSTSTEHETDEER).

Belongs to the RxLR effector family.

The protein resides in the secreted. The protein localises to the host nucleus. Its function is as follows. Effector that acts as a broad suppressor of cell death to interrupt plant immunity. Inhibits cell death induced by cell death-inducing proteins, including the PAMP elicitor INF1 from P.infestans. The protein is Secreted RxLR effector protein 30 of Plasmopara viticola (Downy mildew of grapevine).